A 227-amino-acid polypeptide reads, in one-letter code: Cytochrome c oxidase subunit 2 (227 aa).

The Mitochondrial intermembrane segment spans residues 1–14 (MAYPFQLGLQDATS). Residues 15 to 45 (PIMEELLHFHDHTLMIVFLISSLVLYIISLM) form a helical membrane-spanning segment. At 46–59 (LTTKLTHTSTMDAQ) the chain is on the mitochondrial matrix side. A helical membrane pass occupies residues 60–87 (EVETVWTILPAIILILIALPSLRILYMM). The Mitochondrial intermembrane segment spans residues 88-227 (DEINNPSLTV…YFETWSALMV (140 aa)). Cu cation contacts are provided by His161, Cys196, Glu198, Cys200, His204, and Met207. Residue Glu198 coordinates Mg(2+). The residue at position 218 (Tyr218) is a Phosphotyrosine.

The protein belongs to the cytochrome c oxidase subunit 2 family. Component of the cytochrome c oxidase (complex IV, CIV), a multisubunit enzyme composed of 14 subunits. The complex is composed of a catalytic core of 3 subunits MT-CO1, MT-CO2 and MT-CO3, encoded in the mitochondrial DNA, and 11 supernumerary subunits COX4I, COX5A, COX5B, COX6A, COX6B, COX6C, COX7A, COX7B, COX7C, COX8 and NDUFA4, which are encoded in the nuclear genome. The complex exists as a monomer or a dimer and forms supercomplexes (SCs) in the inner mitochondrial membrane with NADH-ubiquinone oxidoreductase (complex I, CI) and ubiquinol-cytochrome c oxidoreductase (cytochrome b-c1 complex, complex III, CIII), resulting in different assemblies (supercomplex SCI(1)III(2)IV(1) and megacomplex MCI(2)III(2)IV(2)). Found in a complex with TMEM177, COA6, COX18, COX20, SCO1 and SCO2. Interacts with TMEM177 in a COX20-dependent manner. Interacts with COX20. Interacts with COX16. Cu cation is required as a cofactor.

Its subcellular location is the mitochondrion inner membrane. The enzyme catalyses 4 Fe(II)-[cytochrome c] + O2 + 8 H(+)(in) = 4 Fe(III)-[cytochrome c] + 2 H2O + 4 H(+)(out). In terms of biological role, component of the cytochrome c oxidase, the last enzyme in the mitochondrial electron transport chain which drives oxidative phosphorylation. The respiratory chain contains 3 multisubunit complexes succinate dehydrogenase (complex II, CII), ubiquinol-cytochrome c oxidoreductase (cytochrome b-c1 complex, complex III, CIII) and cytochrome c oxidase (complex IV, CIV), that cooperate to transfer electrons derived from NADH and succinate to molecular oxygen, creating an electrochemical gradient over the inner membrane that drives transmembrane transport and the ATP synthase. Cytochrome c oxidase is the component of the respiratory chain that catalyzes the reduction of oxygen to water. Electrons originating from reduced cytochrome c in the intermembrane space (IMS) are transferred via the dinuclear copper A center (CU(A)) of subunit 2 and heme A of subunit 1 to the active site in subunit 1, a binuclear center (BNC) formed by heme A3 and copper B (CU(B)). The BNC reduces molecular oxygen to 2 water molecules using 4 electrons from cytochrome c in the IMS and 4 protons from the mitochondrial matrix. The protein is Cytochrome c oxidase subunit 2 (MT-CO2) of Canis mesomelas elongae (Eastern African black-backed jackal).